Here is a 33-residue protein sequence, read N- to C-terminus: rho operon leader peptide (33 aa).

A compositionally biased stretch (polar residues) spans 1-25; it reads MRSEQISGSSLNPSCRFSSAYSPVT. Residues 1–33 form a disordered region; sequence MRSEQISGSSLNPSCRFSSAYSPVTRQRKDMSR.

This is rho operon leader peptide (rhoL) from Escherichia coli O157:H7.